Reading from the N-terminus, the 637-residue chain is Chaperone protein DnaK (637 aa).

Threonine 198 bears the Phosphothreonine; by autocatalysis mark. The tract at residues 597-637 (MYAKTSQAGAGPQPGAGPGTGGQGPGKKDEDVVDADFEEVK) is disordered. The segment covering 608 to 621 (PQPGAGPGTGGQGP) has biased composition (gly residues). A compositionally biased stretch (acidic residues) spans 627–637 (DVVDADFEEVK).

Belongs to the heat shock protein 70 family.

Functionally, acts as a chaperone. This Syntrophus aciditrophicus (strain SB) protein is Chaperone protein DnaK.